The sequence spans 304 residues: Oxygen-dependent coproporphyrinogen-III oxidase (304 aa).

Ser-94 contributes to the substrate binding site. 2 residues coordinate a divalent metal cation: His-98 and His-108. Residue His-108 is the Proton donor of the active site. 110 to 112 (NVR) contacts substrate. Residues His-147 and His-177 each contribute to the a divalent metal cation site. Positions 242-277 (YVEFNLVYDRGTLFGLQTGGRTESILMSMPPLVRWE) are important for dimerization. 260–262 (GGR) provides a ligand contact to substrate.

This sequence belongs to the aerobic coproporphyrinogen-III oxidase family. As to quaternary structure, homodimer. A divalent metal cation serves as cofactor.

Its subcellular location is the cytoplasm. It catalyses the reaction coproporphyrinogen III + O2 + 2 H(+) = protoporphyrinogen IX + 2 CO2 + 2 H2O. The protein operates within porphyrin-containing compound metabolism; protoporphyrin-IX biosynthesis; protoporphyrinogen-IX from coproporphyrinogen-III (O2 route): step 1/1. Involved in the heme biosynthesis. Catalyzes the aerobic oxidative decarboxylation of propionate groups of rings A and B of coproporphyrinogen-III to yield the vinyl groups in protoporphyrinogen-IX. The sequence is that of Oxygen-dependent coproporphyrinogen-III oxidase from Shewanella piezotolerans (strain WP3 / JCM 13877).